The sequence spans 406 residues: Synaptic vesicle membrane protein VAT-1 homolog (406 aa).

Residues 1-57 (MSAEREAAEAATVAAATEAGAETGTGAGEGAPSQPPTVEVASDPQPPPAPEASASAS) form a disordered region. N-acetylserine is present on Ser2. A Phosphoserine modification is found at Ser2. Residues 9-22 (EAATVAAATEAGAE) show a composition bias toward low complexity. A phosphoserine mark is found at Ser33 and Ser42.

It belongs to the zinc-containing alcohol dehydrogenase family. Quinone oxidoreductase subfamily.

It is found in the cytoplasm. The protein resides in the mitochondrion outer membrane. Functionally, plays a part in calcium-regulated keratinocyte activation in epidermal repair mechanisms. Has no effect on cell proliferation. Possesses ATPase activity. Negatively regulates mitochondrial fusion in cooperation with mitofusin proteins (MFN1-2). The polypeptide is Synaptic vesicle membrane protein VAT-1 homolog (Vat1) (Mus musculus (Mouse)).